Here is a 25-residue protein sequence, read N- to C-terminus: NVDFNSESTRRKKKQKEIVDLXNSL.

The disordered stretch occupies residues 1 to 25; sequence NVDFNSESTRRKKKQKEIVDLXNSL.

The protein belongs to the CRISP family. In terms of processing, contains 8 disulfide bonds. As to expression, expressed by the venom gland.

Its subcellular location is the secreted. The protein is Cysteine-rich venom protein 25 of Naja haje haje (Egyptian cobra).